A 183-amino-acid chain; its full sequence is ATP synthase subunit delta (183 aa).

The protein belongs to the ATPase delta chain family. F-type ATPases have 2 components, F(1) - the catalytic core - and F(0) - the membrane proton channel. F(1) has five subunits: alpha(3), beta(3), gamma(1), delta(1), epsilon(1). F(0) has three main subunits: a(1), b(2) and c(10-14). The alpha and beta chains form an alternating ring which encloses part of the gamma chain. F(1) is attached to F(0) by a central stalk formed by the gamma and epsilon chains, while a peripheral stalk is formed by the delta and b chains.

The protein resides in the cell inner membrane. Its function is as follows. F(1)F(0) ATP synthase produces ATP from ADP in the presence of a proton or sodium gradient. F-type ATPases consist of two structural domains, F(1) containing the extramembraneous catalytic core and F(0) containing the membrane proton channel, linked together by a central stalk and a peripheral stalk. During catalysis, ATP synthesis in the catalytic domain of F(1) is coupled via a rotary mechanism of the central stalk subunits to proton translocation. This protein is part of the stalk that links CF(0) to CF(1). It either transmits conformational changes from CF(0) to CF(1) or is implicated in proton conduction. This is ATP synthase subunit delta from Rickettsia prowazekii (strain Madrid E).